Here is a 328-residue protein sequence, read N- to C-terminus: Flotillin-like protein FloA (328 aa).

2 helical membrane passes run 9 to 29 (LLIT…VPVG) and 30 to 50 (LWIS…IGMR).

The protein belongs to the flotillin-like FloA family. As to quaternary structure, homooligomerizes.

It is found in the cell membrane. The protein resides in the membrane raft. In terms of biological role, found in functional membrane microdomains (FMM) that may be equivalent to eukaryotic membrane rafts. FMMs are highly dynamic and increase in number as cells age. Flotillins are thought to be important factors in membrane fluidity. In Exiguobacterium sp. (strain ATCC BAA-1283 / AT1b), this protein is Flotillin-like protein FloA.